The sequence spans 267 residues: Probable membrane transporter protein MJ0441 (267 aa).

The next 7 membrane-spanning stretches (helical) occupy residues 10-30 (LLLL…GSLF), 31-51 (GIGG…YFGI), 55-75 (VKFA…ISIF), 87-107 (ASIT…FLVV), 158-178 (FLSG…LAMA), 185-205 (AVAI…ISYL), and 213-233 (IYNI…PIIY).

Belongs to the 4-toluene sulfonate uptake permease (TSUP) (TC 2.A.102) family.

It is found in the cell membrane. The polypeptide is Probable membrane transporter protein MJ0441 (Methanocaldococcus jannaschii (strain ATCC 43067 / DSM 2661 / JAL-1 / JCM 10045 / NBRC 100440) (Methanococcus jannaschii)).